The following is a 444-amino-acid chain: Argininosuccinate synthase (444 aa).

Residues 17-25 (AFSGGLDTS) and Ala43 each bind ATP. Tyr99 is an L-citrulline binding site. ATP is bound by residues Gly129 and Thr131. 3 residues coordinate L-aspartate: Thr131, Asn135, and Asp136. Asn135 lines the L-citrulline pocket. Asp136 contributes to the ATP binding site. L-citrulline contacts are provided by Arg139 and Ser192. Asp194 is an ATP binding site. Residues Thr201, Glu203, and Glu280 each coordinate L-citrulline.

This sequence belongs to the argininosuccinate synthase family. Type 2 subfamily. As to quaternary structure, homotetramer.

The protein resides in the cytoplasm. It carries out the reaction L-citrulline + L-aspartate + ATP = 2-(N(omega)-L-arginino)succinate + AMP + diphosphate + H(+). Its pathway is amino-acid biosynthesis; L-arginine biosynthesis; L-arginine from L-ornithine and carbamoyl phosphate: step 2/3. The sequence is that of Argininosuccinate synthase from Delftia acidovorans (strain DSM 14801 / SPH-1).